A 594-amino-acid polypeptide reads, in one-letter code: Proteasome-associated ATPase (594 aa).

The span at 1–10 shows a compositional bias: polar residues; it reads MMETPNNDSS. Residues 1-23 form a disordered region; the sequence is MMETPNNDSSRTPDEAAGAPDPE. Residues 35–86 adopt a coiled-coil conformation; the sequence is ADRQVNILRDKLRHIDRQLAAATQNNSKLVGMLETAKAEILRLKNALDQEGQ. Residue 282–287 coordinates ATP; the sequence is GCGKTL. The interval 593-594 is docks into pockets in the proteasome alpha-ring; that stretch reads YL.

Belongs to the AAA ATPase family. In terms of assembly, homohexamer. Assembles into a hexameric ring structure that caps the 20S proteasome core. Strongly interacts with the prokaryotic ubiquitin-like protein Pup through a hydrophobic interface; the interacting region of ARC lies in its N-terminal coiled-coil domain. There is one Pup binding site per ARC hexamer ring. Upon ATP-binding, the C-terminus of ARC interacts with the alpha-rings of the proteasome core, possibly by binding to the intersubunit pockets.

It participates in protein degradation; proteasomal Pup-dependent pathway. ATPase which is responsible for recognizing, binding, unfolding and translocation of pupylated proteins into the bacterial 20S proteasome core particle. May be essential for opening the gate of the 20S proteasome via an interaction with its C-terminus, thereby allowing substrate entry and access to the site of proteolysis. Thus, the C-termini of the proteasomal ATPase may function like a 'key in a lock' to induce gate opening and therefore regulate proteolysis. The chain is Proteasome-associated ATPase from Arthrobacter sp. (strain FB24).